Consider the following 149-residue polypeptide: Large ribosomal subunit protein bL20m (149 aa).

The transit peptide at 1–9 directs the protein to the mitochondrion; the sequence is MVFLSAPLW.

The protein belongs to the bacterial ribosomal protein bL20 family. Component of the mitochondrial ribosome large subunit (39S) which comprises a 16S rRNA and about 50 distinct proteins. Interacts with OXA1L.

It localises to the mitochondrion. The protein is Large ribosomal subunit protein bL20m (MRPL20) of Bos taurus (Bovine).